We begin with the raw amino-acid sequence, 32 residues long: Calcitonin (32 aa).

The cysteines at positions 1 and 7 are disulfide-linked. The residue at position 32 (Pro-32) is a Proline amide.

Belongs to the calcitonin family.

It is found in the secreted. Its function is as follows. Calcitonin is a peptide hormone that causes a rapid but short-lived drop in the level of calcium and phosphate in blood by promoting the incorporation of those ions in the bones. Calcitonin function is mediated by the calcitonin receptor/CALCR and the CALCR-RAMP2 (AMYR2) receptor complex. In Bos taurus (Bovine), this protein is Calcitonin (CALCA).